Here is a 450-residue protein sequence, read N- to C-terminus: 23S rRNA (uracil(1939)-C(5))-methyltransferase RlmD (450 aa).

Positions 12–70 constitute a TRAM domain; that stretch reads SKQLSAKLSLSVNQLDHLGAGIAQHQGKVVFIPGALPDETVTVQLTEQKKNYARAKLIK. C83, C89, C92, and C171 together coordinate [4Fe-4S] cluster. Residues Q283, F312, N317, E333, D360, and D380 each contribute to the S-adenosyl-L-methionine site. Catalysis depends on C406, which acts as the Nucleophile.

The protein belongs to the class I-like SAM-binding methyltransferase superfamily. RNA M5U methyltransferase family. RlmD subfamily.

The enzyme catalyses uridine(1939) in 23S rRNA + S-adenosyl-L-methionine = 5-methyluridine(1939) in 23S rRNA + S-adenosyl-L-homocysteine + H(+). Its function is as follows. Catalyzes the formation of 5-methyl-uridine at position 1939 (m5U1939) in 23S rRNA. The polypeptide is 23S rRNA (uracil(1939)-C(5))-methyltransferase RlmD (Shewanella baltica (strain OS195)).